A 380-amino-acid polypeptide reads, in one-letter code: Chaperone protein DnaJ (380 aa).

Residues 5 to 69 (DYYEILGVSK…QKRAHYDQFG (65 aa)) form the J domain. The CR-type zinc finger occupies 135–217 (GKETDIEIPS…CGGTGRVKRR (83 aa)). The Zn(2+) site is built by C148, C151, C165, C168, C191, C194, C205, and C208. 4 CXXCXGXG motif repeats span residues 148-155 (CNTCHGTG), 165-172 (CPHCHGAG), 191-198 (CPYCGGTG), and 205-212 (CTTCGGTG).

The protein belongs to the DnaJ family. Homodimer. Requires Zn(2+) as cofactor.

The protein resides in the cytoplasm. Participates actively in the response to hyperosmotic and heat shock by preventing the aggregation of stress-denatured proteins and by disaggregating proteins, also in an autonomous, DnaK-independent fashion. Unfolded proteins bind initially to DnaJ; upon interaction with the DnaJ-bound protein, DnaK hydrolyzes its bound ATP, resulting in the formation of a stable complex. GrpE releases ADP from DnaK; ATP binding to DnaK triggers the release of the substrate protein, thus completing the reaction cycle. Several rounds of ATP-dependent interactions between DnaJ, DnaK and GrpE are required for fully efficient folding. Also involved, together with DnaK and GrpE, in the DNA replication of plasmids through activation of initiation proteins. The polypeptide is Chaperone protein DnaJ (Geobacillus stearothermophilus (Bacillus stearothermophilus)).